The chain runs to 492 residues: Aerolysin (492 aa).

The first 21 residues, 1-21 (MKALKITGLSLIISATLAAQT), serve as a signal peptide directing secretion. 2 disulfide bridges follow: cysteine 42-cysteine 98 and cysteine 182-cysteine 187. Residues 68–84 (WQISGLANNWVILGPGY) are interaction with host N-linked glycan. A part of the transmembrane beta-barrel after proteolytic activation of the toxin and insertion into the host membrane region spans residues 256–288 (YGLSEKVSTKNKFKWPLVGETEVSIEIAANQSW). Positions 346–355 (RWGGNAWHTH) are interaction with glycans from host GPI-anchor. The propeptide occupies 446–492 (GSDSKVRRTRSVDGANTGLKLDIPLDAQELAELGFENVTLSVTPARN).

This sequence belongs to the aerolysin family. As to quaternary structure, homodimer in solution; homoheptamer in the host membrane. After binding to GPI-anchored proteins in target membranes and proteolytic removal of the C-terminal propeptide, the protein assembles into a heptameric pre-pore complex. A further conformation change leads to insertion into the host membrane. In terms of processing, proteolytic cleavage and subsequent release of the propeptide trigger a major conformation change, leading to the formation of a heptameric pre-pore that then inserts into the host membrane.

The protein resides in the secreted. The protein localises to the host cell membrane. Its function is as follows. Secreted, cytolytic toxin that forms pores in host membranes after proteolytic removal of a C-terminal propeptide, leading to destruction of the membrane permeability barrier and cell death. The pores are formed by transmembrane beta-strands and are approximately 3 nm in diameter. This Aeromonas enteropelogenes (Aeromonas trota) protein is Aerolysin (aerA).